Here is a 251-residue protein sequence, read N- to C-terminus: 3-deoxy-manno-octulosonate cytidylyltransferase (251 aa).

This sequence belongs to the KdsB family.

It localises to the cytoplasm. It carries out the reaction 3-deoxy-alpha-D-manno-oct-2-ulosonate + CTP = CMP-3-deoxy-beta-D-manno-octulosonate + diphosphate. It functions in the pathway nucleotide-sugar biosynthesis; CMP-3-deoxy-D-manno-octulosonate biosynthesis; CMP-3-deoxy-D-manno-octulosonate from 3-deoxy-D-manno-octulosonate and CTP: step 1/1. Its pathway is bacterial outer membrane biogenesis; lipopolysaccharide biosynthesis. Its function is as follows. Activates KDO (a required 8-carbon sugar) for incorporation into bacterial lipopolysaccharide in Gram-negative bacteria. This is 3-deoxy-manno-octulosonate cytidylyltransferase from Sodalis glossinidius (strain morsitans).